We begin with the raw amino-acid sequence, 769 residues long: PDZ domain-containing protein 4 (769 aa).

Positions 130–214 (EVELYKSSHR…TNISLLVARP (85 aa)) constitute a PDZ domain. The disordered stretch occupies residues 221-315 (RWKDSDRDDF…TNTPGSLRKF (95 aa)). A compositionally biased stretch (acidic residues) spans 229-239 (DFLDDFGSENE). Phosphoserine is present on Ser236. Residues 282 to 298 (RTDESTRNEESSEHDLL) show a composition bias toward basic and acidic residues. Residues 389 to 419 (VNRNESLGHEMAMLEEELRHLEFKCRNILRA) adopt a coiled-coil conformation. The tract at residues 445-579 (ASEPKKHELS…RHRGQGQEGE (135 aa)) is disordered. Over residues 447-467 (EPKKHELSDISELPEKSDKDS) the composition is skewed to basic and acidic residues. The residue at position 454 (Ser454) is a Phosphoserine. A compositionally biased stretch (polar residues) spans 468 to 479 (TSAYNTGESCRS). Over residues 530–547 (LSRDPEAGRRQHAEERGR) the composition is skewed to basic and acidic residues.

Brain-specific. Expressed in fetal and adult brain. Up-regulated in synovial carcinomas.

It localises to the cytoplasm. The protein resides in the cell cortex. The sequence is that of PDZ domain-containing protein 4 (PDZD4) from Homo sapiens (Human).